The primary structure comprises 333 residues: Adenosine deaminase (333 aa).

Histidine 12 and histidine 14 together coordinate Zn(2+). The substrate site is built by histidine 14, aspartate 16, and glycine 170. Histidine 197 serves as a coordination point for Zn(2+). Glutamate 200 (proton donor) is an active-site residue. Aspartate 278 provides a ligand contact to Zn(2+). Aspartate 279 is a binding site for substrate.

It belongs to the metallo-dependent hydrolases superfamily. Adenosine and AMP deaminases family. Adenosine deaminase subfamily. The cofactor is Zn(2+).

The catalysed reaction is adenosine + H2O + H(+) = inosine + NH4(+). It carries out the reaction 2'-deoxyadenosine + H2O + H(+) = 2'-deoxyinosine + NH4(+). In terms of biological role, catalyzes the hydrolytic deamination of adenosine and 2-deoxyadenosine. The polypeptide is Adenosine deaminase (Salmonella agona (strain SL483)).